The sequence spans 430 residues: Glutamate-1-semialdehyde 2,1-aminomutase (430 aa).

Lys267 is subject to N6-(pyridoxal phosphate)lysine.

The protein belongs to the class-III pyridoxal-phosphate-dependent aminotransferase family. HemL subfamily. Homodimer. Pyridoxal 5'-phosphate is required as a cofactor.

The protein localises to the cytoplasm. The enzyme catalyses (S)-4-amino-5-oxopentanoate = 5-aminolevulinate. It participates in porphyrin-containing compound metabolism; protoporphyrin-IX biosynthesis; 5-aminolevulinate from L-glutamyl-tRNA(Glu): step 2/2. This is Glutamate-1-semialdehyde 2,1-aminomutase from Anaeromyxobacter sp. (strain K).